The sequence spans 259 residues: Submandibular glandular kallikrein-9 (259 aa).

A signal peptide spans 1–18 (MWFLILFLALSLGQIDAA). A propeptide spans 19-24 (PPGQSR) (activation peptide). Positions 25–256 (VVGGYNCETN…FTSWIKKVMK (232 aa)) constitute a Peptidase S1 domain. Intrachain disulfides connect C31–C171, C48–C64, C150–C217, C182–C196, and C207–C232. The active-site Charge relay system is the H63. N106 carries an N-linked (GlcNAc...) asparagine glycan. D118 functions as the Charge relay system in the catalytic mechanism. S211 (charge relay system) is an active-site residue.

It belongs to the peptidase S1 family. Kallikrein subfamily. As to quaternary structure, heterodimer of a light chain and heavy chain linked by a disulfide bond.

It carries out the reaction Preferential cleavage of Arg-|-Xaa bonds in small molecule substrates. Highly selective action to release kallidin (lysyl-bradykinin) from kininogen involves hydrolysis of Met-|-Xaa or Leu-|-Xaa.. In terms of biological role, glandular kallikreins cleave Met-Lys and Arg-Ser bonds in kininogen to release Lys-bradykinin. This enzyme has a vasoconstrictor activity. KLK-9 has both a chymotrypsin-like and a trypsin-like properties. The sequence is that of Submandibular glandular kallikrein-9 (Klk9) from Rattus norvegicus (Rat).